A 263-amino-acid chain; its full sequence is Indole-3-glycerol phosphate synthase (263 aa).

It belongs to the TrpC family.

It catalyses the reaction 1-(2-carboxyphenylamino)-1-deoxy-D-ribulose 5-phosphate + H(+) = (1S,2R)-1-C-(indol-3-yl)glycerol 3-phosphate + CO2 + H2O. It participates in amino-acid biosynthesis; L-tryptophan biosynthesis; L-tryptophan from chorismate: step 4/5. This Sulfurimonas denitrificans (strain ATCC 33889 / DSM 1251) (Thiomicrospira denitrificans (strain ATCC 33889 / DSM 1251)) protein is Indole-3-glycerol phosphate synthase.